A 526-amino-acid polypeptide reads, in one-letter code: Choline/ethanolamine transporter FLVCR2 (526 aa).

The disordered stretch occupies residues 1 to 70 (MVNEGPNQEE…PSGLAHPSSS (70 aa)). Topologically, residues 1–76 (MVNEGPNQEE…PSSSGPEDLS (76 aa)) are cytoplasmic. 1–84 (MVNEGPNQEE…LSVIKVSRRR (84 aa)) lines the heme b pocket. Tandem repeats lie at residues 25 to 30 (PSVSVH), 31 to 36 (PSVSVH), 37 to 42 (PSVSIN), 43 to 48 (PSVSVH), and 49 to 54 (PSSSAH). Over residues 25–56 (PSVSVHPSVSVHPSVSINPSVSVHPSSSAHPS) the composition is skewed to low complexity. An 8 X 6 AA tandem repeats of P-S-[VS]-S-[VIAG]-[HNP] region spans residues 25–72 (PSVSVHPSVSVHPSVSINPSVSVHPSSSAHPSALAQPSGLAHPSSSGP). A 6; approximate repeat occupies 55–60 (PSALAQ). The 7; approximate repeat unit spans residues 61-66 (PSGLAH). Repeat unit 8 spans residues 67-72 (PSSSGP). The helical transmembrane segment at 77–101 (VIKVSRRRWAVVLVFSCYSMCNSFQ) threads the bilayer. Choline is bound by residues asparagine 98 and tryptophan 102. Residues 102 to 119 (WIQYGSINNIFMHFYGVS) lie on the Extracellular side of the membrane. The helical transmembrane segment at 120 to 147 (AFAIDWLSMCYMLTYIPLLLPVAWLLEK) threads the bilayer. The Cytoplasmic portion of the chain corresponds to 148-149 (FG). A helical membrane pass occupies residues 150–169 (LRTIALTGSALNCLGAWVKL). Over 170–176 (GSLKPHL) the chain is Extracellular. Residues 177-205 (FPVTVVGQLICSVAQVFILGMPSRIASVW) form a helical membrane-spanning segment. Residues glutamine 191 and leucine 195 each coordinate choline. Topologically, residues 206-210 (FGANE) are cytoplasmic. A helical membrane pass occupies residues 211–236 (VSTACSVAVFGNQLGIAIGFLVPPVL). The Extracellular portion of the chain corresponds to 237–241 (VPNIE). The chain crosses the membrane as a helical span at residues 242–271 (DRDELAYHISIMFYIIGGVATLLLILVIIV). The Cytoplasmic portion of the chain corresponds to 272 to 307 (FKEKPKYPPSRAQSLSYALTSPDASYLGSIARLFKN). Residues 308-338 (LNFVLLVITYGLNAGAFYALSTLLNRMVIWH) form a helical membrane-spanning segment. Tyrosine 325 provides a ligand contact to choline. At 339 to 342 (YPGE) the chain is on the extracellular side. The helical transmembrane segment at 343–371 (EVNAGRIGLTIVIAGMLGAVISGIWLDRS) threads the bilayer. Residues 372–373 (KT) are Cytoplasmic-facing. The chain crosses the membrane as a helical span at residues 374 to 396 (YKETTLVVYIMTLVGMVVYTFTL). The Extracellular portion of the chain corresponds to 397 to 399 (NLG). The helical transmembrane segment at 400–429 (HLWVVFITAGTMGFFMTGYLPLGFEFAVEL) threads the bilayer. Residues 430–437 (TYPESEGI) lie on the Cytoplasmic side of the membrane. Residues 438–463 (SSGLLNISAQVFGIIFTISQGQIIDN) traverse the membrane as a helical segment. Glutamine 447 provides a ligand contact to choline. Residues 464-465 (YG) lie on the Extracellular side of the membrane. A helical membrane pass occupies residues 466-488 (TKPGNIFLCVFLTLGAALTAFIK). Topologically, residues 489 to 526 (ADLRRQKANKETLENKLQEEEEESNTSKVPTAVSEDHL) are cytoplasmic. A disordered region spans residues 500 to 526 (TLENKLQEEEEESNTSKVPTAVSEDHL). The residue at position 515 (serine 515) is a Phosphoserine.

It belongs to the major facilitator superfamily. Feline leukemia virus subgroup C receptor (TC 2.A.1.28.1) family. Interacts with components of electron transfer chain complexes III, IV and V including CYC1, NDUFA4, COX4I1, ATP5PD and ATP5F1C; these interactions occur in the absence of heme and are disrupted upon heme binding. Interacts with ATP2A2; this interaction occurs in the absence of heme and promotes ATP2A2 proteasomal degradation; the complex is dissociated upon heme binding. Interacts with HMOX1; this interaction is potentiated in the presence of heme. In terms of tissue distribution, expressed in non-hematopoietic tissues, with relative abundant expression in brain, placenta, lung, liver and kidney. Also expressed in hematopoietic tissues (fetal liver, spleen, lymph node, thymus, leukocytes and bone marrow). Found in acidophil cells of the pituitary that secrete growth hormone and prolactin (at protein level).

The protein resides in the cell membrane. It is found in the mitochondrion membrane. Its subcellular location is the endoplasmic reticulum membrane. It catalyses the reaction choline(out) = choline(in). It carries out the reaction ethanolamine(in) = ethanolamine(out). The enzyme catalyses heme b(in) = heme b(out). Functionally, choline uniporter that specifically mediates choline uptake at the blood-brain-barrier. Responsible for the majority of choline uptake across the blood-brain-barrier from the circulation into the brain. Choline, a nutrient critical for brain development, is a precursor of phosphatidylcholine, as well as betaine. Also mediates transport of ethanolamine. Choline and ethanolamine transport is not coupled with proton transport and is exclusively driven by the choline gradient across the plasma membrane. However, the presence of an inwardly directed proton gradient enhances choline uptake. Also acts as a heme b transporter. Required to regulate mitochondrial respiration processes, ATP synthesis and thermogenesis. At low heme levels, interacts with components of electron transfer chain (ETC) complexes and ATP2A2, leading to ubiquitin-mediated degradation of ATP2A2 and inhibition of thermogenesis. Upon heme binding, dissociates from ETC complexes to allow switching from mitochondrial ATP synthesis to thermogenesis. This chain is Choline/ethanolamine transporter FLVCR2, found in Homo sapiens (Human).